We begin with the raw amino-acid sequence, 286 residues long: Bifunctional protein FolD (286 aa).

NADP(+)-binding positions include 166-168 and serine 191; that span reads GRS.

The protein belongs to the tetrahydrofolate dehydrogenase/cyclohydrolase family. Homodimer.

It catalyses the reaction (6R)-5,10-methylene-5,6,7,8-tetrahydrofolate + NADP(+) = (6R)-5,10-methenyltetrahydrofolate + NADPH. It carries out the reaction (6R)-5,10-methenyltetrahydrofolate + H2O = (6R)-10-formyltetrahydrofolate + H(+). It participates in one-carbon metabolism; tetrahydrofolate interconversion. In terms of biological role, catalyzes the oxidation of 5,10-methylenetetrahydrofolate to 5,10-methenyltetrahydrofolate and then the hydrolysis of 5,10-methenyltetrahydrofolate to 10-formyltetrahydrofolate. This is Bifunctional protein FolD from Lactiplantibacillus plantarum (strain ATCC BAA-793 / NCIMB 8826 / WCFS1) (Lactobacillus plantarum).